The sequence spans 450 residues: tRNA-2-methylthio-N(6)-dimethylallyladenosine synthase (450 aa).

The region spanning lysine 7 to arginine 127 is the MTTase N-terminal domain. Residues cysteine 16, cysteine 52, cysteine 90, cysteine 165, cysteine 169, and cysteine 172 each coordinate [4Fe-4S] cluster. The Radical SAM core domain occupies glutamine 151–alanine 378. The TRAM domain maps to isoleucine 381–threonine 443.

Belongs to the methylthiotransferase family. MiaB subfamily. As to quaternary structure, monomer. [4Fe-4S] cluster serves as cofactor.

It is found in the cytoplasm. The catalysed reaction is N(6)-dimethylallyladenosine(37) in tRNA + (sulfur carrier)-SH + AH2 + 2 S-adenosyl-L-methionine = 2-methylsulfanyl-N(6)-dimethylallyladenosine(37) in tRNA + (sulfur carrier)-H + 5'-deoxyadenosine + L-methionine + A + S-adenosyl-L-homocysteine + 2 H(+). Catalyzes the methylthiolation of N6-(dimethylallyl)adenosine (i(6)A), leading to the formation of 2-methylthio-N6-(dimethylallyl)adenosine (ms(2)i(6)A) at position 37 in tRNAs that read codons beginning with uridine. In Caulobacter sp. (strain K31), this protein is tRNA-2-methylthio-N(6)-dimethylallyladenosine synthase.